The sequence spans 347 residues: Anthranilate phosphoribosyltransferase (347 aa).

Residues G88, 91–92 (GD), T96, 98–101 (NIST), 116–124 (KHGNRSVSS), and S128 each bind 5-phospho-alpha-D-ribose 1-diphosphate. G88 contacts anthranilate. S100 contacts Mg(2+). N119 serves as a coordination point for anthranilate. R174 lines the anthranilate pocket. Residues D232 and E233 each coordinate Mg(2+).

Belongs to the anthranilate phosphoribosyltransferase family. In terms of assembly, homodimer. Mg(2+) serves as cofactor.

The catalysed reaction is N-(5-phospho-beta-D-ribosyl)anthranilate + diphosphate = 5-phospho-alpha-D-ribose 1-diphosphate + anthranilate. It functions in the pathway amino-acid biosynthesis; L-tryptophan biosynthesis; L-tryptophan from chorismate: step 2/5. Functionally, catalyzes the transfer of the phosphoribosyl group of 5-phosphorylribose-1-pyrophosphate (PRPP) to anthranilate to yield N-(5'-phosphoribosyl)-anthranilate (PRA). This chain is Anthranilate phosphoribosyltransferase, found in Shewanella oneidensis (strain ATCC 700550 / JCM 31522 / CIP 106686 / LMG 19005 / NCIMB 14063 / MR-1).